We begin with the raw amino-acid sequence, 227 residues long: MGDNYSTYLLDIEGTVCPISFVKETLFPYFTKKVPQLVQQDTRDSPVSNILSQFHIDDKEQLQAHILELVAKDVKDPILKQLQGYIWAQGYESGQIKAPVYADAIDFIKRKKRVFIYSSGSVKAQKLLFGYVQDPNAPAHDSLDLNSYIDGYFDINTSGKKTETQSYANILRDIGAKASEVLFLSDNPLELDAAAGVGIATGLASRPGNAPVPDGQKYQVYKDFETL.

D11 and E13 together coordinate Mg(2+). Substrate-binding positions include 118-119 (SS) and K161. Residue D186 participates in Mg(2+) binding.

It belongs to the HAD-like hydrolase superfamily. MasA/MtnC family. As to quaternary structure, monomer. It depends on Mg(2+) as a cofactor.

The protein localises to the cytoplasm. It is found in the nucleus. It carries out the reaction 5-methylsulfanyl-2,3-dioxopentyl phosphate + H2O = 1,2-dihydroxy-5-(methylsulfanyl)pent-1-en-3-one + phosphate. The protein operates within amino-acid biosynthesis; L-methionine biosynthesis via salvage pathway; L-methionine from S-methyl-5-thio-alpha-D-ribose 1-phosphate: step 3/6. Its pathway is amino-acid biosynthesis; L-methionine biosynthesis via salvage pathway; L-methionine from S-methyl-5-thio-alpha-D-ribose 1-phosphate: step 4/6. In terms of biological role, bifunctional enzyme that catalyzes the enolization of 2,3-diketo-5-methylthiopentyl-1-phosphate (DK-MTP-1-P) into the intermediate 2-hydroxy-3-keto-5-methylthiopentenyl-1-phosphate (HK-MTPenyl-1-P), which is then dephosphorylated to form the acireductone 1,2-dihydroxy-3-keto-5-methylthiopentene (DHK-MTPene). The sequence is that of Enolase-phosphatase E1 from Saccharomyces cerevisiae (strain RM11-1a) (Baker's yeast).